Reading from the N-terminus, the 186-residue chain is MTEGIDIKELKRRMDGAVSAFKSDIASLRTGRASANILDPVTIEAYGSRMPLNQVANITVPEPRMLSVSVWDKSMVSAVERGIRESNLGLNPIVDGQSLRIPLPELNEERRKSLVKVAHDYAEKSKVAIRHVRRDGMDGLKKAEKDGVIGQDEGRAQSERVQKMTDETISEIDRLLGEKEKEIMQV.

It belongs to the RRF family.

It is found in the cytoplasm. Functionally, responsible for the release of ribosomes from messenger RNA at the termination of protein biosynthesis. May increase the efficiency of translation by recycling ribosomes from one round of translation to another. In Rhizobium leguminosarum bv. trifolii (strain WSM2304), this protein is Ribosome-recycling factor.